Consider the following 519-residue polypeptide: Polyamine aminopropyltransferase (519 aa).

Transmembrane regions (helical) follow at residues 17–37 (LLLV…LALV), 53–73 (LIVA…KPFL), 86–106 (LLGL…AVVG), 109–129 (LWML…ELPL), 158–178 (LGAL…LGMM), 180–200 (GAAA…CVLL), and 208–228 (QFIR…TVLV). The interval 200–463 (LRHLLPRAQF…FQLCGPEGTE (264 aa)) is spermidine synthase. Residues 225-459 (TVLVRSDGIV…GDWGFQLCGP (235 aa)) enclose the PABS domain. Position 255 (Q255) interacts with S-methyl-5'-thioadenosine. D307 contacts spermidine. Residues E326 and 358-359 (DA) each bind S-methyl-5'-thioadenosine. Residue D379 is the Proton acceptor of the active site.

It belongs to the spermidine/spermine synthase family. In terms of assembly, homodimer or homotetramer.

The protein resides in the cell membrane. It carries out the reaction S-adenosyl 3-(methylsulfanyl)propylamine + putrescine = S-methyl-5'-thioadenosine + spermidine + H(+). It functions in the pathway amine and polyamine biosynthesis; spermidine biosynthesis; spermidine from putrescine: step 1/1. Functionally, catalyzes the irreversible transfer of a propylamine group from the amino donor S-adenosylmethioninamine (decarboxy-AdoMet) to putrescine (1,4-diaminobutane) to yield spermidine. This chain is Polyamine aminopropyltransferase, found in Corynebacterium efficiens (strain DSM 44549 / YS-314 / AJ 12310 / JCM 11189 / NBRC 100395).